The chain runs to 470 residues: 1-aminocyclopropane-1-carboxylate synthase 5 (470 aa).

Positions 47 and 85 each coordinate substrate. Lys272 bears the N6-(pyridoxal phosphate)lysine mark. Ser461 is modified (phosphoserine).

It belongs to the class-I pyridoxal-phosphate-dependent aminotransferase family. Homodimer and heterodimer. In vivo, the relevance of heterodimerization with other ACS enzymes is however unsure. Interacts (via its C-terminal region) with FEI1, FEI2, ETO1, EOL1 and EOL2. Interacts with GRF3. Pyridoxal 5'-phosphate is required as a cofactor. Post-translationally, may be processed at its C-terminus. In terms of processing, ubiquitinated. The interaction with ETO1 (and possibly EOL1 and EOL2) mediate its proteasome-dependent degradation. Its stability and degradation plays a central role in ethylene biosynthesis. In terms of tissue distribution, expressed in roots and siliques.

It catalyses the reaction S-adenosyl-L-methionine = 1-aminocyclopropane-1-carboxylate + S-methyl-5'-thioadenosine + H(+). It functions in the pathway alkene biosynthesis; ethylene biosynthesis via S-adenosyl-L-methionine; ethylene from S-adenosyl-L-methionine: step 1/2. 1-aminocyclopropane-1-carboxylate synthase (ACS) enzymes catalyze the conversion of S-adenosyl-L-methionine (SAM) into 1-aminocyclopropane-1-carboxylate (ACC), a direct precursor of ethylene. This is 1-aminocyclopropane-1-carboxylate synthase 5 (ACS5) from Arabidopsis thaliana (Mouse-ear cress).